Here is a 528-residue protein sequence, read N- to C-terminus: Coiled-coil domain-containing protein 116 (528 aa).

The disordered stretch occupies residues 43-68 (GHVPHPPSTCGSSALQNQRRNKRHPQ). The span at 51–60 (TCGSSALQNQ) shows a compositional bias: polar residues. Residues 81 to 104 (HVLDSLETVVEKATERMAAMKTEA) adopt a coiled-coil conformation. Disordered regions lie at residues 335–444 (PLFP…RQRA) and 497–528 (SSSP…THHS). The segment covering 363–378 (PTNSGQPHPTVSSPKT) has biased composition (polar residues). A Phosphoserine modification is found at Ser-389. The segment covering 419–429 (HSREKEPDSDP) has biased composition (basic and acidic residues). Over residues 434-443 (PPVSLSSRQR) the composition is skewed to polar residues. Over residues 497 to 510 (SSSPSSLCPEVTSS) the composition is skewed to low complexity.

The protein localises to the cytoplasm. The protein resides in the cytoskeleton. Its subcellular location is the microtubule organizing center. It localises to the centrosome. The polypeptide is Coiled-coil domain-containing protein 116 (CCDC116) (Macaca fascicularis (Crab-eating macaque)).